We begin with the raw amino-acid sequence, 273 residues long: Bis(5'-nucleosyl)-tetraphosphatase, symmetrical (273 aa).

It belongs to the Ap4A hydrolase family.

The enzyme catalyses P(1),P(4)-bis(5'-adenosyl) tetraphosphate + H2O = 2 ADP + 2 H(+). Functionally, hydrolyzes diadenosine 5',5'''-P1,P4-tetraphosphate to yield ADP. The polypeptide is Bis(5'-nucleosyl)-tetraphosphatase, symmetrical (Aeromonas salmonicida (strain A449)).